A 509-amino-acid polypeptide reads, in one-letter code: ESX-2 secretion system protein eccD2 (509 aa).

11 consecutive transmembrane segments (helical) span residues 135-155 (LTAA…VLAL), 170-190 (AMAG…WWGW), 196-216 (LFSG…ACAP), 222-242 (AAHA…IGVA), 248-268 (QTAV…VAAV), 281-301 (ICVL…ALWV), 364-384 (VQVG…WGVL), 389-409 (PWAW…ITQG), 418-438 (AVAL…KYAL), 449-469 (LWPA…ALVV), and 487-507 (VLAM…FAWL).

This sequence belongs to the EccD/Snm4 family. As to quaternary structure, part of the ESX-2 / type VII secretion system (T7SS), which is composed of cytosolic and membrane components.

Its subcellular location is the cell membrane. This is ESX-2 secretion system protein eccD2 (eccD2) from Mycobacterium tuberculosis (strain CDC 1551 / Oshkosh).